The sequence spans 849 residues: MVRLGSYCEHNGSISQAWLDSGLSPCFYFTLVPSVLLSFSFLLGALQSALYARHSTTMEPKYIPRSRLYRLQIVLSVVLILQSVIGLIWQAAGTDVVYGYMIVHGCLSVVAWGFSLWLLHLERTRALVREKSRGHGVVLLLFWALAFAAENLAFISWQSPNWWWLSRDTVPQKVQFGLWITRYVCTLFLFVLGIRAPGRPRKPYIVLINEDERDVETSQPLLRDPNQSTWQGFKKKLLLVMQYIWPRRNIPLQLLVALCMGLMGLERAINVFVPIYAKKIVDGLTEDSTWNILAVTVCIYVLLKFLQGGGAGTTGFLSNLRTFMWIRVQQFTNREVQIRLFAHLHSLSLRWHLGRKTGEVLRSVDRGTSSINSLLSYIVFSILPTIADIVIGIVYFTSSFNAWFGLIIFVCMTLYLTLTIIITEWRTKYRREMNTRDNEAKSRAVDSLLNFETVKYYNAEGYEVGRFNDSIMKYQVSEWKVNASLAMLNQTQNLIIGLGLLAGSLLCAYFVTENKFKVGDYVLFGTYIIQLYTPLNWFGTYYRMIQSSFIDMENMFELFNEDQEVKDAVNAPALMFRSGKIEFENVHFSYLDGKEILRDISFTVMPGQSIALVGPSGSGKSTIIRLLFRFYDVKGGTIKVDGQDISTVRQESLRSHIGVVPQDTVLFNDTIRNNIRYGRVSATDDEVEEAAAAADIHERILSFRDGYDTQTGERGLKLSGGEKQRVAIARTILKAPQIILLDEATSALDTETERNIQASLAKVCANRTTIVVAHRLSTVINSDQILVLKEGQIVERGRHEELLLKGGVYAGMWQKQQSGSESSSDSDSERKDRTSEKLQPPKATPRRGH.

At 1 to 25 (MVRLGSYCEHNGSISQAWLDSGLSP) the chain is on the lumenal side. The tract at residues 1 to 195 (MVRLGSYCEH…TLFLFVLGIR (195 aa)) is required for the lysosomal targeting. Positions 1 to 227 (MVRLGSYCEH…SQPLLRDPNQ (227 aa)) are required for ATPase activity. Cys8 and Cys26 form a disulfide bridge. The N-linked (GlcNAc...) asparagine glycan is linked to Asn11. Residues 26 to 46 (CFYFTLVPSVLLSFSFLLGAL) traverse the membrane as a helical segment. Residues 47 to 72 (QSALYARHSTTMEPKYIPRSRLYRLQ) are Cytoplasmic-facing. Residues 73 to 93 (IVLSVVLILQSVIGLIWQAAG) traverse the membrane as a helical segment. The Lumenal portion of the chain corresponds to 94–98 (TDVVY). A helical membrane pass occupies residues 99 to 119 (GYMIVHGCLSVVAWGFSLWLL). At 120-136 (HLERTRALVREKSRGHG) the chain is on the cytoplasmic side. The chain crosses the membrane as a helical span at residues 137–157 (VVLLLFWALAFAAENLAFISW). Over 158–173 (QSPNWWWLSRDTVPQK) the chain is Lumenal. A helical membrane pass occupies residues 174 to 194 (VQFGLWITRYVCTLFLFVLGI). Over 195 to 254 (RAPGRPRKPYIVLINEDERDVETSQPLLRDPNQSTWQGFKKKLLLVMQYIWPRRNIPLQL) the chain is Cytoplasmic. Residues 255–275 (LVALCMGLMGLERAINVFVPI) traverse the membrane as a helical segment. Residues 256 to 547 (VALCMGLMGL…FGTYYRMIQS (292 aa)) form the ABC transmembrane type-1 domain. The Lumenal portion of the chain corresponds to 276 to 291 (YAKKIVDGLTEDSTWN). The helical transmembrane segment at 292–312 (ILAVTVCIYVLLKFLQGGGAG) threads the bilayer. Over 313–373 (TTGFLSNLRT…VDRGTSSINS (61 aa)) the chain is Cytoplasmic. Residues 374–394 (LLSYIVFSILPTIADIVIGIV) traverse the membrane as a helical segment. Residues 395 to 401 (YFTSSFN) are Lumenal-facing. The helical transmembrane segment at 402–422 (AWFGLIIFVCMTLYLTLTIII) threads the bilayer. Topologically, residues 423 to 492 (TEWRTKYRRE…ASLAMLNQTQ (70 aa)) are cytoplasmic. A helical membrane pass occupies residues 493 to 513 (NLIIGLGLLAGSLLCAYFVTE). Residues 514 to 520 (NKFKVGD) are Lumenal-facing. A helical transmembrane segment spans residues 521 to 541 (YVLFGTYIIQLYTPLNWFGTY). Over 542–849 (YRMIQSSFID…PPKATPRRGH (308 aa)) the chain is Cytoplasmic. The ABC transporter domain occupies 581-815 (IEFENVHFSY…GGVYAGMWQK (235 aa)). Residues Tyr590 and 614 to 625 (GPSGSGKSTIIR) each bind ATP. Residues 814 to 825 (QKQQSGSESSSD) show a composition bias toward low complexity. The disordered stretch occupies residues 814–849 (QKQQSGSESSSDSDSERKDRTSEKLQPPKATPRRGH). The span at 827-836 (DSERKDRTSE) shows a compositional bias: basic and acidic residues.

The protein belongs to the ABC transporter superfamily. ABCB family. Heavy Metal importer (TC 3.A.1.210) subfamily. As to quaternary structure, homodimer. Post-translationally, N-glycosylated.

It is found in the cell membrane. Its subcellular location is the mitochondrion outer membrane. It localises to the endoplasmic reticulum membrane. The protein localises to the golgi apparatus membrane. The protein resides in the endosome membrane. It is found in the lysosome membrane. Its subcellular location is the late endosome membrane. It localises to the early endosome membrane. The protein localises to the secreted. The protein resides in the extracellular exosome. It is found in the mitochondrion. Its subcellular location is the endosome. It localises to the multivesicular body membrane. The protein localises to the melanosome membrane. It carries out the reaction heme b(in) + ATP + H2O = heme b(out) + ADP + phosphate + H(+). It catalyses the reaction coproporphyrin III(in) + ATP + H2O = coproporphyrin III(out) + ADP + phosphate + H(+). The enzyme catalyses pheophorbide a(in) + ATP + H2O = pheophorbide a(out) + ADP + phosphate + H(+). The catalysed reaction is coproporphyrinogen III(in) + ATP + H2O = coproporphyrinogen III(out) + ADP + phosphate + H(+). It carries out the reaction protoporphyrin IX(in) + ATP + H2O = protoporphyrin IX(out) + ADP + phosphate + H(+). It catalyses the reaction coproporphyrin I(in) + ATP + H2O = coproporphyrin I(out) + ADP + phosphate + H(+). The enzyme catalyses uroporphyrin I(in) + ATP + H2O = uroporphyrin I(out) + ADP + phosphate + H(+). The catalysed reaction is uroporphyrin III(in) + ATP + H2O = uroporphyrin III(out) + ADP + phosphate + H(+). Functionally, ATP-dependent transporter that catalyzes the transport of a broad-spectrum of porphyrins from the cytoplasm to the extracellular space through the plasma membrane or into the vesicle lumen. May also function as an ATP-dependent importer of porphyrins from the cytoplasm into the mitochondria, in turn may participate in the de novo heme biosynthesis regulation and in the coordination of heme and iron homeostasis during phenylhydrazine stress. May also play a key role in the early steps of melanogenesis producing PMEL amyloid fibrils. In vitro, it confers to cells a resistance to toxic metal such as arsenic and cadmium and against chemotherapeutics agent such as 5-fluorouracil, SN-38 and vincristin. In addition may play a role in the transition metal homeostasis. This Xenopus tropicalis (Western clawed frog) protein is ATP-binding cassette sub-family B member 6 (abcb6).